The primary structure comprises 180 residues: Protein C2-DOMAIN ABA-RELATED 10 (180 aa).

The C2 domain occupies 1-105; sequence MDQKPLGLLT…EALKMGMELL (105 aa). Ca(2+) is bound by residues arginine 22, aspartate 23, aspartate 28, aspartate 74, tryptophan 75, aspartate 76, and aspartate 82.

This sequence belongs to the plant CAR protein family. As to quaternary structure, binds to PYR/PYL/RCAR abscisic acid intracellular receptors in an ABA-independent manner, both at the plasma membrane and in the nucleus.

Its subcellular location is the cell membrane. It is found in the nucleus. Stimulates the GTPase/ATPase activities of Obg-like ATPases. Mediates the transient calcium-dependent interaction of PYR/PYL/RCAR abscisic acid (ABA) receptors with the plasma membrane and thus regulates ABA sensitivity. This is Protein C2-DOMAIN ABA-RELATED 10 from Arabidopsis thaliana (Mouse-ear cress).